A 390-amino-acid polypeptide reads, in one-letter code: Acetylornithine aminotransferase (390 aa).

Residues 105 to 106 and phenylalanine 132 each bind pyridoxal 5'-phosphate; that span reads GA. Arginine 135 contacts N(2)-acetyl-L-ornithine. 217–220 provides a ligand contact to pyridoxal 5'-phosphate; sequence DEVQ. Residue lysine 246 is modified to N6-(pyridoxal phosphate)lysine. Serine 274 lines the N(2)-acetyl-L-ornithine pocket. Threonine 275 is a binding site for pyridoxal 5'-phosphate.

It belongs to the class-III pyridoxal-phosphate-dependent aminotransferase family. ArgD subfamily. As to quaternary structure, homodimer. Pyridoxal 5'-phosphate serves as cofactor.

It is found in the cytoplasm. It catalyses the reaction N(2)-acetyl-L-ornithine + 2-oxoglutarate = N-acetyl-L-glutamate 5-semialdehyde + L-glutamate. It functions in the pathway amino-acid biosynthesis; L-arginine biosynthesis; N(2)-acetyl-L-ornithine from L-glutamate: step 4/4. This Methanothermobacter thermautotrophicus (strain ATCC 29096 / DSM 1053 / JCM 10044 / NBRC 100330 / Delta H) (Methanobacterium thermoautotrophicum) protein is Acetylornithine aminotransferase.